Here is a 780-residue protein sequence, read N- to C-terminus: Subtilisin-like protease SBT1.3 (780 aa).

A signal peptide spans 1–25; sequence MANKNPLQKPFLFIILSINLIFLQA. The propeptide at 26-120 is activation peptide; the sequence is ETTTQISTKK…VIPETRYELH (95 aa). In terms of domain architecture, Inhibitor I9 spans 36 to 120; it reads TYVIHMDKSA…VIPETRYELH (85 aa). The region spanning 116–628 is the Peptidase S8 domain; that stretch reads RYELHTTRSP…AGHIDPLRAT (513 aa). Asp154 serves as the catalytic Charge relay system. A glycan (N-linked (GlcNAc...) asparagine) is linked at Asn165. Residue His227 is the Charge relay system of the active site. Positions 384–477 constitute a PA domain; it reads KQYPLVYLGR…GEKEGKLIKQ (94 aa). A glycan (N-linked (GlcNAc...) asparagine) is linked at Asn394. Ser560 (charge relay system) is an active-site residue. N-linked (GlcNAc...) asparagine glycosylation is found at Asn663 and Asn731.

It belongs to the peptidase S8 family.

The protein resides in the secreted. This Arabidopsis thaliana (Mouse-ear cress) protein is Subtilisin-like protease SBT1.3.